Consider the following 416-residue polypeptide: Serine hydroxymethyltransferase (416 aa).

Residues Leu120 and 124-126 (GHL) each bind (6S)-5,6,7,8-tetrahydrofolate. Lys230 is subject to N6-(pyridoxal phosphate)lysine. Position 246 (Glu246) interacts with (6S)-5,6,7,8-tetrahydrofolate.

This sequence belongs to the SHMT family. As to quaternary structure, homodimer. The cofactor is pyridoxal 5'-phosphate.

Its subcellular location is the cytoplasm. The catalysed reaction is (6R)-5,10-methylene-5,6,7,8-tetrahydrofolate + glycine + H2O = (6S)-5,6,7,8-tetrahydrofolate + L-serine. It functions in the pathway one-carbon metabolism; tetrahydrofolate interconversion. The protein operates within amino-acid biosynthesis; glycine biosynthesis; glycine from L-serine: step 1/1. Its function is as follows. Catalyzes the reversible interconversion of serine and glycine with tetrahydrofolate (THF) serving as the one-carbon carrier. This reaction serves as the major source of one-carbon groups required for the biosynthesis of purines, thymidylate, methionine, and other important biomolecules. Also exhibits THF-independent aldolase activity toward beta-hydroxyamino acids, producing glycine and aldehydes, via a retro-aldol mechanism. In Onion yellows phytoplasma (strain OY-M), this protein is Serine hydroxymethyltransferase.